Here is a 270-residue protein sequence, read N- to C-terminus: Hydroxyethylthiazole kinase (270 aa).

M47 provides a ligand contact to substrate. Positions 123 and 169 each coordinate ATP. G196 is a substrate binding site.

The protein belongs to the Thz kinase family. Mg(2+) serves as cofactor.

The enzyme catalyses 5-(2-hydroxyethyl)-4-methylthiazole + ATP = 4-methyl-5-(2-phosphooxyethyl)-thiazole + ADP + H(+). It participates in cofactor biosynthesis; thiamine diphosphate biosynthesis; 4-methyl-5-(2-phosphoethyl)-thiazole from 5-(2-hydroxyethyl)-4-methylthiazole: step 1/1. Catalyzes the phosphorylation of the hydroxyl group of 4-methyl-5-beta-hydroxyethylthiazole (THZ). The chain is Hydroxyethylthiazole kinase from Roseiflexus castenholzii (strain DSM 13941 / HLO8).